The chain runs to 133 residues: Nickel-responsive regulator (133 aa).

Positions 76, 87, 89, and 95 each coordinate Ni(2+).

The protein belongs to the transcriptional regulatory CopG/NikR family. Homotetramer. Requires Ni(2+) as cofactor.

Transcriptional repressor of the nikABCDE operon. Is active in the presence of excessive concentrations of intracellular nickel. This chain is Nickel-responsive regulator, found in Escherichia coli O6:K15:H31 (strain 536 / UPEC).